The primary structure comprises 664 residues: ATP-dependent RNA helicase MSS116, mitochondrial (664 aa).

Residues 1-26 (MLTSILIKGRTPVLASRNLLAALSNC) constitute a mitochondrion transit peptide. Residues 42–79 (NRDQRNFGRNQRNNNSNRYRNSRFNSRPRTRSREDDDE) form a disordered region. A compositionally biased stretch (low complexity) spans 48–68 (FGRNQRNNNSNRYRNSRFNSR). Residues 106–134 (SLLEEGVLDKEIHKAITRMEFPGLTPVQQ) carry the Q motif motif. The region spanning 139–326 (PILSSEDHDV…NNIMNKKECL (188 aa)) is the Helicase ATP-binding domain. 152-159 (AKTGTGKT) contributes to the ATP binding site. Positions 267-270 (DEAD) match the DEAD box motif. The region spanning 355 to 512 (SIFAAVEHIK…EKYEPSEEIK (158 aa)) is the Helicase C-terminal domain. Positions 602–664 (GNNKSYDYDD…NYSSRNSNIY (63 aa)) are disordered. Residues 628–638 (QNRDYDDEPFR) are compositionally biased toward basic and acidic residues. Over residues 639–649 (RSNNNRRSFSR) the composition is skewed to low complexity. Over residues 653-664 (KNNYSSRNSNIY) the composition is skewed to polar residues.

The protein belongs to the DEAD box helicase family. DDX18/HAS1 subfamily.

Its subcellular location is the mitochondrion matrix. The enzyme catalyses ATP + H2O = ADP + phosphate + H(+). In terms of biological role, ATP-dependent RNA helicase required for mitochondrial splicing of group I and II introns. Specifically involved in the ATP-dependent splicing of the bl1 intron of COB. Also required for efficient mitochondrial translation. The protein is ATP-dependent RNA helicase MSS116, mitochondrial (MSS116) of Saccharomyces cerevisiae (strain ATCC 204508 / S288c) (Baker's yeast).